Here is a 627-residue protein sequence, read N- to C-terminus: Polyadenylate-binding protein, cytoplasmic and nuclear (627 aa).

A compositionally biased stretch (polar residues) spans 1-11; sequence MSAADANQVQE. The disordered stretch occupies residues 1–46; sequence MSAADANQVQESLEKLNLDSAPVASTEETEQTASGETEEAADSAQV. 4 consecutive RRM domains span residues 51–129, 139–216, 232–309, and 335–412; these read ASLY…WSQR, GNIF…KHIS, TNVY…RAQK, and VNLF…LAQR. The span at 511-535 shows a compositional bias: low complexity; it reads DFNNGANGGRQQRGYYPNRNQNQKG. The tract at residues 511–537 is disordered; it reads DFNNGANGGRQQRGYYPNRNQNQKGRQ. Positions 537–618 constitute a PABC domain; sequence QQKDLAAIIA…ALTAFEEYKK (82 aa).

This sequence belongs to the polyadenylate-binding protein type-1 family.

The protein resides in the cytoplasm. It localises to the nucleus. Binds the poly(A) tail of mRNA. Appears to be an important mediator of the multiple roles of the poly(A) tail in mRNA biogenesis, stability and translation. In the nucleus, involved in both mRNA cleavage and polyadenylation. Is also required for efficient mRNA export to the cytoplasm. Acts in concert with a poly(A)-specific nuclease (PAN) to affect poly(A) tail shortening, which may occur concomitantly with either nucleocytoplasmic mRNA transport or translational initiation. In the cytoplasm, stimulates translation initiation and regulates mRNA decay through translation termination-coupled poly(A) shortening, probably mediated by PAN. This chain is Polyadenylate-binding protein, cytoplasmic and nuclear (PAB1), found in Debaryomyces hansenii (strain ATCC 36239 / CBS 767 / BCRC 21394 / JCM 1990 / NBRC 0083 / IGC 2968) (Yeast).